The chain runs to 339 residues: Ketol-acid reductoisomerase (NADP(+)) (339 aa).

One can recognise a KARI N-terminal Rossmann domain in the interval 1-182; that stretch reads MKIYYEKDAD…GNTRAGVIET (182 aa). Residues 24–27, S51, S53, and 83–86 each bind NADP(+); these read YGSQ and DEKQ. Residue H108 is part of the active site. Residue G134 coordinates NADP(+). The 146-residue stretch at 183-328 folds into the KARI C-terminal knotted domain; it reads SFREETETDL…EKLRGMMHWA (146 aa). Mg(2+) is bound by residues D191, E195, E227, and E231. S252 lines the substrate pocket.

This sequence belongs to the ketol-acid reductoisomerase family. Requires Mg(2+) as cofactor.

The enzyme catalyses (2R)-2,3-dihydroxy-3-methylbutanoate + NADP(+) = (2S)-2-acetolactate + NADPH + H(+). The catalysed reaction is (2R,3R)-2,3-dihydroxy-3-methylpentanoate + NADP(+) = (S)-2-ethyl-2-hydroxy-3-oxobutanoate + NADPH + H(+). It functions in the pathway amino-acid biosynthesis; L-isoleucine biosynthesis; L-isoleucine from 2-oxobutanoate: step 2/4. It participates in amino-acid biosynthesis; L-valine biosynthesis; L-valine from pyruvate: step 2/4. Its function is as follows. Involved in the biosynthesis of branched-chain amino acids (BCAA). Catalyzes an alkyl-migration followed by a ketol-acid reduction of (S)-2-acetolactate (S2AL) to yield (R)-2,3-dihydroxy-isovalerate. In the isomerase reaction, S2AL is rearranged via a Mg-dependent methyl migration to produce 3-hydroxy-3-methyl-2-ketobutyrate (HMKB). In the reductase reaction, this 2-ketoacid undergoes a metal-dependent reduction by NADPH to yield (R)-2,3-dihydroxy-isovalerate. In Hyphomonas neptunium (strain ATCC 15444), this protein is Ketol-acid reductoisomerase (NADP(+)).